A 299-amino-acid polypeptide reads, in one-letter code: ATP phosphoribosyltransferase (299 aa).

This sequence belongs to the ATP phosphoribosyltransferase family. Long subfamily. As to quaternary structure, equilibrium between an active dimeric form, an inactive hexameric form and higher aggregates. Interconversion between the various forms is largely reversible and is influenced by the natural substrates and inhibitors of the enzyme. It depends on Mg(2+) as a cofactor.

It localises to the cytoplasm. It carries out the reaction 1-(5-phospho-beta-D-ribosyl)-ATP + diphosphate = 5-phospho-alpha-D-ribose 1-diphosphate + ATP. It participates in amino-acid biosynthesis; L-histidine biosynthesis; L-histidine from 5-phospho-alpha-D-ribose 1-diphosphate: step 1/9. Its activity is regulated as follows. Feedback inhibited by histidine. Functionally, catalyzes the condensation of ATP and 5-phosphoribose 1-diphosphate to form N'-(5'-phosphoribosyl)-ATP (PR-ATP). Has a crucial role in the pathway because the rate of histidine biosynthesis seems to be controlled primarily by regulation of HisG enzymatic activity. The polypeptide is ATP phosphoribosyltransferase (Proteus mirabilis (strain HI4320)).